Consider the following 157-residue polypeptide: Small ribosomal subunit protein uS7 (157 aa).

The protein belongs to the universal ribosomal protein uS7 family. Part of the 30S ribosomal subunit. Contacts proteins S9 and S11.

Its function is as follows. One of the primary rRNA binding proteins, it binds directly to 16S rRNA where it nucleates assembly of the head domain of the 30S subunit. Is located at the subunit interface close to the decoding center, probably blocks exit of the E-site tRNA. This Roseiflexus castenholzii (strain DSM 13941 / HLO8) protein is Small ribosomal subunit protein uS7.